Consider the following 360-residue polypeptide: Protein Wnt-2 (360 aa).

The first 37 residues, 1-37 (MIPRRSCWLILLLNLLNVQSLLDASWWSTVAQLSTAL), serve as a signal peptide directing secretion. Cystine bridges form between Cys80–Cys91, Cys130–Cys138, Cys140–Cys158, Cys213–Cys227, Cys215–Cys222, Cys289–Cys320, Cys305–Cys315, Cys319–Cys359, Cys335–Cys350, Cys337–Cys347, and Cys342–Cys343. The N-linked (GlcNAc...) asparagine glycan is linked to Asn90. The O-palmitoleoyl serine; by mom-1 moiety is linked to residue Ser219. Asn352 carries N-linked (GlcNAc...) asparagine glycosylation.

Belongs to the Wnt family. Palmitoleoylation is required for efficient binding to frizzled receptors. Depalmitoleoylation leads to Wnt signaling pathway inhibition. As to expression, expressed in intestine, pharynx, anterior body wall muscle, vulva, some pharyngeal neurons and SMD head neurons. Expressed along the boundary between the intestine and muscle or hypodermis, but is also expressed in the hypodermis in cells including seam cells.

The protein resides in the secreted. It localises to the extracellular space. It is found in the extracellular matrix. In terms of biological role, ligand for members of the frizzled family of seven transmembrane receptors. Probable developmental protein. May be a signaling molecule which affects the development of discrete regions of tissues. Is likely to signal over only few cell diameters. Involved in the correct positioning of the developing nerve ring and in axon guidance of SIA and SIB neurons, probably by binding to tyrosine kinase receptor cam-1. In addition, regulates the positioning of some head neuronal cells, muscle arms associated with the nerve ring and the excretory pore. Together with Wnt ligand cwn-1, regulates the migration of CAN, ALM, BDU and HSN neurons during embryogenesis, the migration of QL and QR neuroblast descendants during larval development, and polarity of ALM neurons. May act through the wnt receptor cfz-2 to regulate QR neuroblast descendant migration, and to direct ALM migration. Also plays a role in axon growth and guidance in HSN and male CP neurons. In addition, together with wnt ligand cwn-1, negatively regulates developmental neurite pruning of AIM neurons probably by acting as a ligand for receptor tyrosine kinase cam-1. Through the cam-1 receptor also probably regulates the outgrowth of neurites from RME GABAergic motor neurons. May act redundantly with other Wnt ligands such as cwn-1 and mom-2 to control seam cell polarity. This Caenorhabditis elegans protein is Protein Wnt-2.